The chain runs to 121 residues: Non-structural protein 8 (121 aa).

The N-terminal stretch at 1–15 is a signal peptide; the sequence is MKLLIVFGLLTSVYC. Positions 19–121 constitute an SARS ORF8 Ig-like domain; it reads ECSIQECCEN…HDVRVVLDFI (103 aa). 3 disulfide bridges follow: cysteine 25–cysteine 90, cysteine 37–cysteine 102, and cysteine 61–cysteine 83.

This Rhinolophus macrotis (Big-eared horseshoe bat) protein is Non-structural protein 8.